Reading from the N-terminus, the 241-residue chain is Lipoprotein-releasing system ATP-binding protein LolD 2 (241 aa).

Residues 6-241 (LDAQQLSKSY…YKSYEKSTAV (236 aa)) form the ABC transporter domain. Residue 43-50 (GASGSGKT) participates in ATP binding.

This sequence belongs to the ABC transporter superfamily. Lipoprotein translocase (TC 3.A.1.125) family. In terms of assembly, the complex is composed of two ATP-binding proteins (LolD) and two transmembrane proteins (LolC and LolE).

The protein localises to the cell inner membrane. Its function is as follows. Part of the ABC transporter complex LolCDE involved in the translocation of mature outer membrane-directed lipoproteins, from the inner membrane to the periplasmic chaperone, LolA. Responsible for the formation of the LolA-lipoprotein complex in an ATP-dependent manner. In Chlorobium chlorochromatii (strain CaD3), this protein is Lipoprotein-releasing system ATP-binding protein LolD 2.